A 311-amino-acid chain; its full sequence is Formimidoylglutamase (311 aa).

Residues His130, Asp155, His157, Asp159, Cys242, and Asp244 each coordinate Mn(2+).

Belongs to the arginase family. It depends on Mn(2+) as a cofactor.

It carries out the reaction N-formimidoyl-L-glutamate + H2O = formamide + L-glutamate. It functions in the pathway amino-acid degradation; L-histidine degradation into L-glutamate; L-glutamate from N-formimidoyl-L-glutamate (hydrolase route): step 1/1. In terms of biological role, catalyzes the conversion of N-formimidoyl-L-glutamate to L-glutamate and formamide. The protein is Formimidoylglutamase of Staphylococcus aureus (strain MRSA252).